Here is a 453-residue protein sequence, read N- to C-terminus: UDP-N-acetylmuramoylalanine--D-glutamate ligase (453 aa).

Residue 120-126 (GSNGKST) coordinates ATP.

This sequence belongs to the MurCDEF family.

It localises to the cytoplasm. The enzyme catalyses UDP-N-acetyl-alpha-D-muramoyl-L-alanine + D-glutamate + ATP = UDP-N-acetyl-alpha-D-muramoyl-L-alanyl-D-glutamate + ADP + phosphate + H(+). Its pathway is cell wall biogenesis; peptidoglycan biosynthesis. Cell wall formation. Catalyzes the addition of glutamate to the nucleotide precursor UDP-N-acetylmuramoyl-L-alanine (UMA). In Nitrosococcus oceani (strain ATCC 19707 / BCRC 17464 / JCM 30415 / NCIMB 11848 / C-107), this protein is UDP-N-acetylmuramoylalanine--D-glutamate ligase.